The chain runs to 616 residues: Proline--tRNA ligase (616 aa).

This sequence belongs to the class-II aminoacyl-tRNA synthetase family. ProS type 1 subfamily. In terms of assembly, homodimer.

It localises to the cytoplasm. It carries out the reaction tRNA(Pro) + L-proline + ATP = L-prolyl-tRNA(Pro) + AMP + diphosphate. In terms of biological role, catalyzes the attachment of proline to tRNA(Pro) in a two-step reaction: proline is first activated by ATP to form Pro-AMP and then transferred to the acceptor end of tRNA(Pro). As ProRS can inadvertently accommodate and process non-cognate amino acids such as alanine and cysteine, to avoid such errors it has two additional distinct editing activities against alanine. One activity is designated as 'pretransfer' editing and involves the tRNA(Pro)-independent hydrolysis of activated Ala-AMP. The other activity is designated 'posttransfer' editing and involves deacylation of mischarged Ala-tRNA(Pro). The misacylated Cys-tRNA(Pro) is not edited by ProRS. The sequence is that of Proline--tRNA ligase from Streptococcus mutans serotype c (strain ATCC 700610 / UA159).